The following is a 620-amino-acid chain: uncharacterized protein (620 aa).

One can recognise a Radical SAM core domain in the interval 324-586; the sequence is RRYVTIAIIK…HPWEKGIYPT (263 aa). Positions 338, 342, and 345 each coordinate [4Fe-4S] cluster. Lysine 552 carries the post-translational modification N6-(pyridoxal phosphate)lysine.

This sequence belongs to the radical SAM superfamily. KamA family. Requires [4Fe-4S] cluster as cofactor. It depends on pyridoxal 5'-phosphate as a cofactor.

This is an uncharacterized protein from Methanocaldococcus jannaschii (strain ATCC 43067 / DSM 2661 / JAL-1 / JCM 10045 / NBRC 100440) (Methanococcus jannaschii).